Reading from the N-terminus, the 192-residue chain is Protein GrpE (192 aa).

Over residues 1–20 the composition is skewed to basic and acidic residues; the sequence is MEERNEQVVEEVKEEVKEAQ. Residues 1-34 form a disordered region; the sequence is MEERNEQVVEEVKEEVKEAQVEEAVTSEDSEETV. Over residues 25–34 the composition is skewed to acidic residues; that stretch reads VTSEDSEETV.

This sequence belongs to the GrpE family. In terms of assembly, homodimer.

It is found in the cytoplasm. Functionally, participates actively in the response to hyperosmotic and heat shock by preventing the aggregation of stress-denatured proteins, in association with DnaK and GrpE. It is the nucleotide exchange factor for DnaK and may function as a thermosensor. Unfolded proteins bind initially to DnaJ; upon interaction with the DnaJ-bound protein, DnaK hydrolyzes its bound ATP, resulting in the formation of a stable complex. GrpE releases ADP from DnaK; ATP binding to DnaK triggers the release of the substrate protein, thus completing the reaction cycle. Several rounds of ATP-dependent interactions between DnaJ, DnaK and GrpE are required for fully efficient folding. The protein is Protein GrpE of Bacillus cereus (strain AH187).